A 234-amino-acid chain; its full sequence is tRNA1(Val) (adenine(37)-N6)-methyltransferase (234 aa).

Belongs to the methyltransferase superfamily. tRNA (adenine-N(6)-)-methyltransferase family.

The protein resides in the cytoplasm. The enzyme catalyses adenosine(37) in tRNA1(Val) + S-adenosyl-L-methionine = N(6)-methyladenosine(37) in tRNA1(Val) + S-adenosyl-L-homocysteine + H(+). Functionally, specifically methylates the adenine in position 37 of tRNA(1)(Val) (anticodon cmo5UAC). This chain is tRNA1(Val) (adenine(37)-N6)-methyltransferase, found in Phocaeicola vulgatus (strain ATCC 8482 / DSM 1447 / JCM 5826 / CCUG 4940 / NBRC 14291 / NCTC 11154) (Bacteroides vulgatus).